We begin with the raw amino-acid sequence, 459 residues long: DnaJ protein homolog XDJ1 (459 aa).

Residues 7-79 (GDRLYDVLGV…KSHYDLYGDD (73 aa)) enclose the J domain. A CR-type zinc finger spans residues 146 to 240 (GKKLKFDLKR…CAGLGLLSKK (95 aa)). CXXCXGXG motif repeat units follow at residues 159–166 (CIKCHGSG), 181–188 (CESCAGKG), 208–215 (CEKCNGKG), and 228–235 (CPDCAGLG).

The protein resides in the mitochondrion outer membrane. The chain is DnaJ protein homolog XDJ1 (XDJ1) from Saccharomyces cerevisiae (strain ATCC 204508 / S288c) (Baker's yeast).